The chain runs to 114 residues: Pro-FMRFamide-related neuropeptide FF (114 aa).

The first 21 residues, 1–21, serve as a signal peptide directing secretion; sequence MDSKWAAVLLLLLLLRNWGHA. A propeptide spanning residues 22 to 69 is cleaved from the precursor; the sequence is EEAGSWGEDQVFAEEDKGPHPSQYAHTPDRIQTPGSLMRVLLQAMERP. The interval 29–51 is disordered; it reads EDQVFAEEDKGPHPSQYAHTPDR. The residue at position 82 (phenylalanine 82) is a Phenylalanine amide. Residues 85-100 constitute a propeptide that is removed on maturation; the sequence is NAWGPWSKEQLSPQAR. Position 111 is a phenylalanine amide (phenylalanine 111).

The protein belongs to the FARP (FMRFamide related peptide) family.

Its subcellular location is the secreted. In terms of biological role, morphine modulating peptides. Have wide-ranging physiologic effects, including the modulation of morphine-induced analgesia, elevation of arterial blood pressure, and increased somatostatin secretion from the pancreas. Neuropeptide FF and SF potentiate and sensitize ASIC2 and ASIC3 channels. The chain is Pro-FMRFamide-related neuropeptide FF (Npff) from Rattus norvegicus (Rat).